The chain runs to 151 residues: Deoxyuridine 5'-triphosphate nucleotidohydrolase (151 aa).

Substrate-binding positions include 70–72 (RSG), asparagine 83, 87–89 (LID), and methionine 97.

It belongs to the dUTPase family. Mg(2+) serves as cofactor.

It carries out the reaction dUTP + H2O = dUMP + diphosphate + H(+). It participates in pyrimidine metabolism; dUMP biosynthesis; dUMP from dCTP (dUTP route): step 2/2. Its function is as follows. This enzyme is involved in nucleotide metabolism: it produces dUMP, the immediate precursor of thymidine nucleotides and it decreases the intracellular concentration of dUTP so that uracil cannot be incorporated into DNA. The protein is Deoxyuridine 5'-triphosphate nucleotidohydrolase of Actinobacillus pleuropneumoniae serotype 7 (strain AP76).